Consider the following 131-residue polypeptide: MFDISFAELVVVGIVALIVIGPERLPAVARTAGYFLGRARRYVDQVKHDLHEEMELDSLRKLRDSMHETVNSFENSVRSEINKIQETTETQSAVIPDKQPPFEKAAENIEPVNTSETKTSSAPAEPRQPNS.

The chain crosses the membrane as a helical span at residues 1 to 21; the sequence is MFDISFAELVVVGIVALIVIG. Composition is skewed to polar residues over residues 71–93 and 111–131; these read NSFE…TQSA and PVNT…QPNS. The tract at residues 71–131 is disordered; that stretch reads NSFENSVRSE…APAEPRQPNS (61 aa).

It belongs to the TatB family. As to quaternary structure, the Tat system comprises two distinct complexes: a TatABC complex, containing multiple copies of TatA, TatB and TatC subunits, and a separate TatA complex, containing only TatA subunits. Substrates initially bind to the TatABC complex, which probably triggers association of the separate TatA complex to form the active translocon.

It is found in the cell inner membrane. Part of the twin-arginine translocation (Tat) system that transports large folded proteins containing a characteristic twin-arginine motif in their signal peptide across membranes. Together with TatC, TatB is part of a receptor directly interacting with Tat signal peptides. TatB may form an oligomeric binding site that transiently accommodates folded Tat precursor proteins before their translocation. The chain is Sec-independent protein translocase protein TatB from Nitrosomonas europaea (strain ATCC 19718 / CIP 103999 / KCTC 2705 / NBRC 14298).